The following is a 176-amino-acid chain: Translation initiation factor IF-3 (176 aa).

It belongs to the IF-3 family. In terms of assembly, monomer.

It is found in the cytoplasm. In terms of biological role, IF-3 binds to the 30S ribosomal subunit and shifts the equilibrium between 70S ribosomes and their 50S and 30S subunits in favor of the free subunits, thus enhancing the availability of 30S subunits on which protein synthesis initiation begins. The polypeptide is Translation initiation factor IF-3 (Rippkaea orientalis (strain PCC 8801 / RF-1) (Cyanothece sp. (strain PCC 8801))).